The sequence spans 168 residues: Photosystem I assembly protein Ycf3 (168 aa).

3 TPR repeats span residues 35–68, 72–105, and 120–153; these read AFTY…EIDP, SYIL…NPFL, and GEQA…TPGN.

This sequence belongs to the Ycf3 family.

It localises to the plastid. The protein localises to the chloroplast thylakoid membrane. Functionally, essential for the assembly of the photosystem I (PSI) complex. May act as a chaperone-like factor to guide the assembly of the PSI subunits. The protein is Photosystem I assembly protein Ycf3 of Lemna minor (Common duckweed).